Consider the following 509-residue polypeptide: 4-aminobutyrate aminotransferase (509 aa).

166 to 167 (GS) is a pyridoxal 5'-phosphate binding site. Residue R223 participates in substrate binding. The residue at position 363 (K363) is an N6-(pyridoxal phosphate)lysine. T387 is a pyridoxal 5'-phosphate binding site.

Belongs to the class-III pyridoxal-phosphate-dependent aminotransferase family. As to quaternary structure, homodimer. Pyridoxal 5'-phosphate is required as a cofactor.

The protein resides in the cytoplasm. It carries out the reaction 4-aminobutanoate + 2-oxoglutarate = succinate semialdehyde + L-glutamate. Functionally, deaminates gamma-aminobutyric acid (GABA) to succinate-semialdehyde, which in turn is converted to succinate by the succinate semialdehyde dehydrogenase. Not required for the utilization of GABA as nitrogen source. This is 4-aminobutyrate aminotransferase (GATA) from Mycosarcoma maydis (Corn smut fungus).